Here is a 411-residue protein sequence, read N- to C-terminus: Na(+)/H(+) antiporter NhaA 2 (411 aa).

10 helical membrane-spanning segments follow: residues valine 18–valine 38, leucine 59–leucine 79, leucine 97–isoleucine 117, glycine 127–glycine 147, leucine 167–leucine 187, tryptophan 218–leucine 238, proline 261–serine 281, valine 297–isoleucine 317, valine 338–isoleucine 358, and isoleucine 366–leucine 386.

It belongs to the NhaA Na(+)/H(+) (TC 2.A.33) antiporter family.

The protein localises to the cell membrane. It carries out the reaction Na(+)(in) + 2 H(+)(out) = Na(+)(out) + 2 H(+)(in). Functionally, na(+)/H(+) antiporter that extrudes sodium in exchange for external protons. The chain is Na(+)/H(+) antiporter NhaA 2 from Rhodococcus jostii (strain RHA1).